Reading from the N-terminus, the 541-residue chain is Putative apolipoprotein N-acyltransferase (541 aa).

The next 6 membrane-spanning stretches (helical) occupy residues 31–51, 65–85, 89–109, 144–164, 181–201, and 215–235; these read PLPA…AAHA, GWLF…VSMH, GLAA…LALF, AACW…FPWL, LLGV…LAGL, and LAAG…QFSW. Positions 248–511 constitute a CN hydrolase domain; that stretch reads VQGNVEQSQK…AGVLPVAVQG (264 aa). Glu-292 functions as the Proton acceptor in the catalytic mechanism. Lys-366 is a catalytic residue. The Nucleophile role is filled by Cys-416.

This sequence belongs to the CN hydrolase family. Apolipoprotein N-acyltransferase subfamily.

The protein localises to the cell inner membrane. The catalysed reaction is N-terminal S-1,2-diacyl-sn-glyceryl-L-cysteinyl-[lipoprotein] + a glycerophospholipid = N-acyl-S-1,2-diacyl-sn-glyceryl-L-cysteinyl-[lipoprotein] + a 2-acyl-sn-glycero-3-phospholipid + H(+). It participates in protein modification; lipoprotein biosynthesis (N-acyl transfer). Functionally, catalyzes the phospholipid dependent N-acylation of the N-terminal cysteine of apolipoprotein, the last step in lipoprotein maturation. The polypeptide is Putative apolipoprotein N-acyltransferase (Bordetella parapertussis (strain 12822 / ATCC BAA-587 / NCTC 13253)).